Reading from the N-terminus, the 314-residue chain is Acetyl-coenzyme A carboxylase carboxyl transferase subunit alpha (314 aa).

The region spanning 32 to 289 (EIDMLEASLE…KSAFVAQLDS (258 aa)) is the CoA carboxyltransferase C-terminal domain.

Belongs to the AccA family. As to quaternary structure, acetyl-CoA carboxylase is a heterohexamer composed of biotin carboxyl carrier protein (AccB), biotin carboxylase (AccC) and two subunits each of ACCase subunit alpha (AccA) and ACCase subunit beta (AccD).

It is found in the cytoplasm. It carries out the reaction N(6)-carboxybiotinyl-L-lysyl-[protein] + acetyl-CoA = N(6)-biotinyl-L-lysyl-[protein] + malonyl-CoA. Its pathway is lipid metabolism; malonyl-CoA biosynthesis; malonyl-CoA from acetyl-CoA: step 1/1. Functionally, component of the acetyl coenzyme A carboxylase (ACC) complex. First, biotin carboxylase catalyzes the carboxylation of biotin on its carrier protein (BCCP) and then the CO(2) group is transferred by the carboxyltransferase to acetyl-CoA to form malonyl-CoA. In Staphylococcus aureus (strain JH9), this protein is Acetyl-coenzyme A carboxylase carboxyl transferase subunit alpha.